Consider the following 371-residue polypeptide: Undecaprenyl-diphosphatase 1 (371 aa).

The next 3 helical transmembrane spans lie at 53–73 (PYLA…IVAF), 100–120 (LAWL…LLEH), and 126–146 (LGRP…MLLG). Residues 152–226 (RSTTRGAPGP…PEAEDVTLPE (75 aa)) form a disordered region. 3 helical membrane-spanning segments follow: residues 291–311 (FAFL…LPDL), 322–342 (QTLF…RFLA), and 351–371 (TPFA…FGIF).

It belongs to the UppP family.

Its subcellular location is the cell membrane. It carries out the reaction di-trans,octa-cis-undecaprenyl diphosphate + H2O = di-trans,octa-cis-undecaprenyl phosphate + phosphate + H(+). Its function is as follows. Catalyzes the dephosphorylation of undecaprenyl diphosphate (UPP). Confers resistance to bacitracin. This Frankia casuarinae (strain DSM 45818 / CECT 9043 / HFP020203 / CcI3) protein is Undecaprenyl-diphosphatase 1.